A 1758-amino-acid polypeptide reads, in one-letter code: Collagen alpha-2(IV) chain (1758 aa).

A signal peptide spans 1–26; it reads MKQRAALGPVLRLAILALLAVSYVQS. Positions 27-42 are 7S domain; the sequence is QATCRDCSNRGCFCVG. The interval 42-1527 is triple-helical region; sequence GEKGSMGAPG…PGAPGAAGPA (1486 aa). Residues 47 to 62 are compositionally biased toward low complexity; sequence MGAPGPQGPPGTQGIR. Disordered stretches follow at residues 47 to 943, 955 to 1304, 1316 to 1339, and 1367 to 1525; these read MGAP…GAPG, GVPG…GLPG, GFPG…DGLP, and GFPG…GAAG. Residues 102–111 show a composition bias toward gly residues; sequence GNDGGNGRPG. The span at 134–149 shows a compositional bias: pro residues; that stretch reads PGRPGPPGMPGFPGPP. A compositionally biased stretch (basic and acidic residues) spans 189–198; sequence YPGEKGDRGD. Residues 224–234 are compositionally biased toward low complexity; that stretch reads PKGDPGDLGSV. Ser248 is a glycosylation site (O-linked (Xyl...) (glycosaminoglycan) serine). A compositionally biased stretch (basic and acidic residues) spans 258-267; that stretch reads PGEKGDKGEP. Over residues 268–283 the composition is skewed to gly residues; it reads GEGGQRGYPGNGGLSG. A compositionally biased stretch (pro residues) spans 367–382; the sequence is PGPPGLPGRPGNPGPP. Over residues 398–407 the composition is skewed to gly residues; that stretch reads GNTGGPGLPG. Low complexity-rich tracts occupy residues 408–417 and 429–439; these read YPGNEGLPGP and APGVSGPSGIP. A compositionally biased stretch (basic and acidic residues) spans 464 to 479; sequence KDGKPGLDGAPGRKGE. Low complexity-rich tracts occupy residues 495-509 and 568-584; these read GLPG…PGPN and PVGD…AGRP. Positions 638–648 are enriched in pro residues; the sequence is PSGPVGPPGAP. 3 stretches are compositionally biased toward gly residues: residues 693 to 702, 737 to 746, and 782 to 791; these read GAKGDGGLPG, GTKGEGGYPG, and GDKGFGGVPG. A compositionally biased stretch (low complexity) spans 839–858; sequence LPGLPGTPGLEGQRGFPGAP. A compositionally biased stretch (gly residues) spans 859–868; it reads GLKGGDGLPG. Residues 929–938 are compositionally biased toward low complexity; that stretch reads APGQSGAPGL. Residues 958–967 are compositionally biased toward gly residues; it reads GFKGDGGLPG. The segment covering 968–980 has biased composition (low complexity); that stretch reads LPGLNGPKGEPGV. Gly residues predominate over residues 988 to 997; it reads GMKGNGGLPG. A compositionally biased stretch (low complexity) spans 1040-1056; it reads LPGQPGLRGPQGPSGLP. Gly residues predominate over residues 1194 to 1203; sequence GLPGLGGEKG. The span at 1237–1250 shows a compositional bias: low complexity; the sequence is FPGQPGQEGLPGLS. Residues 1251 to 1260 show a composition bias toward gly residues; the sequence is GEKGMGGLPG. The span at 1373–1382 shows a compositional bias: gly residues; the sequence is GLKGEGGLPG. 2 stretches are compositionally biased toward low complexity: residues 1413–1425 and 1433–1454; these read LPGR…ADGP and GPQN…APGL. Composition is skewed to gly residues over residues 1492-1501 and 1507-1516; these read GEKGMGGLPG and GQPGGPGAPG. The region spanning 1531-1754 is the Collagen IV NC1 domain; that stretch reads GFVLVKHSQT…SRCQVCVKST (224 aa). 6 cysteine pairs are disulfide-bonded: Cys1546–Cys1635, Cys1579–Cys1632, Cys1591–Cys1597, Cys1654–Cys1750, Cys1688–Cys1747, and Cys1700–Cys1707.

This sequence belongs to the type IV collagen family. As to quaternary structure, trimers of two alpha 1(IV) and one alpha 2(IV) chain. Type IV collagen forms a mesh-like network linked through intermolecular interactions between 7S domains and between NC1 domains. In terms of processing, prolines at the third position of the tripeptide repeating unit (G-X-Y) are hydroxylated in some or all of the chains. Post-translationally, type IV collagens contain numerous cysteine residues which are involved in inter- and intramolecular disulfide bonding. 12 of these, located in the NC1 domain, are conserved in all known type IV collagens. The trimeric structure of the NC1 domains is stabilized by covalent bonds between Lys and Met residues. As to expression, localizes to the basement membrane between distal tip cells and the germline. Localizes to the intestinal basement membrane.

Its subcellular location is the secreted. It is found in the extracellular space. It localises to the extracellular matrix. The protein localises to the basement membrane. Functionally, collagen type IV is specific for basement membranes. Together with fbl-1 and downstream of metalloprotease mig-17, recruits nidogen nid-1 to the gonad basement membrane thereby probably inducing basement membrane remodeling required for the directional migration of distal tip cells. Required to restrict presynaptic growth at the neuromuscular junctions in late larval stage and in adult motor neurons. Vital for embryonic development. This Caenorhabditis elegans protein is Collagen alpha-2(IV) chain.